Here is a 225-residue protein sequence, read N- to C-terminus: MOB-like protein phocein (225 aa).

Zn(2+) is bound by residues cysteine 92, cysteine 97, cysteine 110, histidine 113, cysteine 119, histidine 127, histidine 169, and histidine 174.

This sequence belongs to the MOB1/phocein family. As to quaternary structure, binds STRN4. Interacts with DNM1 and EPS15. Interacts with nucleoside diphosphate kinase. Interacts with CTTNBP2. Interacts with CTTNBP2NL. Part of the core of STRIPAK complexes composed of PP2A catalytic and scaffolding subunits, the striatins (PP2A regulatory subunits), the striatin-associated proteins MOB4, STRIP1 and STRIP2, PDCD10 and members of the STE20 kinases, such as STK24 and STK26. In terms of processing, phosphorylated on serine residues. Highly expressed in adrenal gland, spinal cord, brain and cerebellum. Detected at lower levels in heart and skeletal muscle, and at very low levels in spleen, liver and intestine.

The protein localises to the cytoplasm. Its subcellular location is the membrane. It is found in the golgi apparatus. The protein resides in the golgi stack membrane. Part of the striatin-interacting phosphatase and kinase (STRIPAK) complexes. STRIPAK complexes have critical roles in protein (de)phosphorylation and are regulators of multiple signaling pathways including Hippo, MAPK, nuclear receptor and cytoskeleton remodeling. Different types of STRIPAK complexes are involved in a variety of biological processes such as cell growth, differentiation, apoptosis, metabolism and immune regulation. This Rattus norvegicus (Rat) protein is MOB-like protein phocein (Mob4).